Here is a 226-residue protein sequence, read N- to C-terminus: 7-cyano-7-deazaguanine synthase (226 aa).

An ATP-binding site is contributed by 9 to 19; sequence YSGGLDSTTCL. The Zn(2+) site is built by C189, C199, C202, and C205.

The protein belongs to the QueC family. Zn(2+) serves as cofactor.

It carries out the reaction 7-carboxy-7-deazaguanine + NH4(+) + ATP = 7-cyano-7-deazaguanine + ADP + phosphate + H2O + H(+). The protein operates within purine metabolism; 7-cyano-7-deazaguanine biosynthesis. In terms of biological role, catalyzes the ATP-dependent conversion of 7-carboxy-7-deazaguanine (CDG) to 7-cyano-7-deazaguanine (preQ(0)). This is 7-cyano-7-deazaguanine synthase from Pelobacter propionicus (strain DSM 2379 / NBRC 103807 / OttBd1).